Reading from the N-terminus, the 248-residue chain is Probable transcriptional regulatory protein Syncc9902_0542 (248 aa).

Belongs to the TACO1 family.

The protein resides in the cytoplasm. This is Probable transcriptional regulatory protein Syncc9902_0542 from Synechococcus sp. (strain CC9902).